The primary structure comprises 123 residues: Large ribosomal subunit protein uL29 (123 aa).

Lys19 is subject to N6-acetyllysine. Residue Lys25 forms a Glycyl lysine isopeptide (Lys-Gly) (interchain with G-Cter in SUMO2) linkage. Residue Ser29 is modified to Phosphoserine. At Lys43 the chain carries N6-acetyllysine. Residues 100–123 (EKLKTKKQQRKERLYPLRKYAVKA) form a disordered region.

Belongs to the universal ribosomal protein uL29 family. As to quaternary structure, component of the large ribosomal subunit.

The protein localises to the cytoplasm. In terms of biological role, component of the large ribosomal subunit. The ribosome is a large ribonucleoprotein complex responsible for the synthesis of proteins in the cell. The chain is Large ribosomal subunit protein uL29 (Rpl35) from Mus musculus (Mouse).